The sequence spans 191 residues: Lipid A acyltransferase PagP (191 aa).

Residues 1–26 (MLKVNKYVILIIAFVSQMMFSTTAQA) form the signal peptide. Residues histidine 63, aspartate 106, and serine 107 contribute to the active site.

The protein belongs to the lipid A palmitoyltransferase family. Homodimer.

It is found in the cell outer membrane. The catalysed reaction is a lipid A + a 1,2-diacyl-sn-glycero-3-phosphocholine = a hepta-acyl lipid A + a 2-acyl-sn-glycero-3-phosphocholine. The enzyme catalyses a lipid IVA + a 1,2-diacyl-sn-glycero-3-phosphocholine = a lipid IVB + a 2-acyl-sn-glycero-3-phosphocholine. It carries out the reaction a lipid IIA + a 1,2-diacyl-sn-glycero-3-phosphocholine = a lipid IIB + a 2-acyl-sn-glycero-3-phosphocholine. Transfers a fatty acid residue from the sn-1 position of a phospholipid to the N-linked hydroxyfatty acid chain on the proximal unit of lipid A or its precursors. The chain is Lipid A acyltransferase PagP from Enterobacter lignolyticus (strain SCF1).